The following is a 269-amino-acid chain: MPELPEVETSRRGIEPHLVGATILHAHIRNGRLRWPVSDEIYRLSDTPVLSVQRRAKYLLLELPDGWIIIHLGMSGSLRILSEALPAEKHDHVDLVMSNGKILRYTDPRRFGAWLWTKELEGHNVLAHLGPEPLSDEFNGEYLQQKCAKKKTAIKPWLMDNKLVVGVGNIYASESLFAAGIHPDRLASSLSTEECDLLARVIKAVLLRSIEQGGTTLKDFLQSDGKPGYFAQELQVYGRKGEPCRVCGTPIVATKHAQRATFYCRHCQK.

Catalysis depends on P2, which acts as the Schiff-base intermediate with DNA. E3 (proton donor) is an active-site residue. K57 (proton donor; for beta-elimination activity) is an active-site residue. DNA-binding residues include H90, R109, and K150. An FPG-type zinc finger spans residues 235 to 269 (QVYGRKGEPCRVCGTPIVATKHAQRATFYCRHCQK). R259 serves as the catalytic Proton donor; for delta-elimination activity.

This sequence belongs to the FPG family. Monomer. Zn(2+) is required as a cofactor.

It catalyses the reaction Hydrolysis of DNA containing ring-opened 7-methylguanine residues, releasing 2,6-diamino-4-hydroxy-5-(N-methyl)formamidopyrimidine.. It carries out the reaction 2'-deoxyribonucleotide-(2'-deoxyribose 5'-phosphate)-2'-deoxyribonucleotide-DNA = a 3'-end 2'-deoxyribonucleotide-(2,3-dehydro-2,3-deoxyribose 5'-phosphate)-DNA + a 5'-end 5'-phospho-2'-deoxyribonucleoside-DNA + H(+). Its function is as follows. Involved in base excision repair of DNA damaged by oxidation or by mutagenic agents. Acts as a DNA glycosylase that recognizes and removes damaged bases. Has a preference for oxidized purines, such as 7,8-dihydro-8-oxoguanine (8-oxoG). Has AP (apurinic/apyrimidinic) lyase activity and introduces nicks in the DNA strand. Cleaves the DNA backbone by beta-delta elimination to generate a single-strand break at the site of the removed base with both 3'- and 5'-phosphates. The protein is Formamidopyrimidine-DNA glycosylase of Salmonella enteritidis PT4 (strain P125109).